The sequence spans 313 residues: Peptidyl-prolyl cis-trans isomerase 9 (313 aa).

The region spanning 9 to 174 (FLDMALDEKP…AKVRIFNSGE (166 aa)) is the PPIase cyclophilin-type domain. 2 stretches are compositionally biased toward basic and acidic residues: residues 216–230 (EERESDFSSKTESSR) and 253–269 (RGDRNRRTQRADRKDDF). Disordered stretches follow at residues 216 to 274 (EERE…IAVR) and 288 to 313 (TPEHWRRNAPSKWQQGSYTHPVDLQP).

The protein belongs to the cyclophilin-type PPIase family.

It carries out the reaction [protein]-peptidylproline (omega=180) = [protein]-peptidylproline (omega=0). In terms of biological role, PPIases accelerate the folding of proteins. It catalyzes the cis-trans isomerization of proline imid ic peptide bonds in oligopeptides. Thought to function as a catalyst in the folding and modification of cuticle collagens. This Caenorhabditis briggsae protein is Peptidyl-prolyl cis-trans isomerase 9.